The sequence spans 819 residues: MSFVTTIRDYAETLNSISDSLGQNFTVRSFILETIVYIFTTCRSCLFYILSFQWIHDFTLLPIVLPEFSSALFREKFFLETPSKVFFDFLEISDLQQNKFLLGFFNSFFLSLPFSVIHILSLRRLLIQGRPAGVYTIGGYLIGQLVFLTCVVFGIRQVLVPWLTLEPFNYLLGIILLFRVIYSMTRENLIELKGWSNPRYTNFFLVSFVLAWCEQTSCFQYLGNITLSSNVTILESFSSTSSISTFFTHTSYLLGIAIGSVLFSLFWGWVFLQVKNLCIFYTPLFTSSFLQFFNKTSFVLALALSLTSIPFYSFEYLVTGPLGFVSQDSVFKNTLLDQTLIKDPGKGLTGLSSLERNFQYLDVDVSPFDRGEYLTVPEVPQNLSFEELNYRGEFDWTLRNLKVSGITDSRSGFFTLSKLFKKENKKSLDSQKQLSSQEISERNPLLSELPLVFRVDLATHYDILNRYRQFYDGNVEESDSDPLLQRPIETISDSSFPSSGEAPQPRVENTIESKIKNKYYSNPVYKNLLALDIDLFLKRQPKTFQVNADQEIDLYTKRKMLEYYTNSLNSYSQLPYFETFDSFFDGAKTFSNKVYNQQFKGTLRSVRRLFTVRNDFVSSSEKLESKTEKVLKFDQPLYQFAEKQPFSPYHEELAQKPEQVLPRAKIGGISFVNTPLYAGWDEHLRKFVITNKLLPRTFAGYKVKIEPQTLKNFTNYSVKQTTKIKFTRWPLSEEKLQLSKQDSSVPYVTLFKILDEKTKETFAENKYLSFPANFELVEFSESQNEKGTTEKLKKPTLVPNRGGFVWPGNSKFKLPLLSN.

The next 6 membrane-spanning stretches (helical) occupy residues 45 to 65 (CLFYILSFQWIHDFTLLPIVL), 100 to 120 (FLLGFFNSFFLSLPFSVIHIL), 135 to 155 (YTIGGYLIGQLVFLTCVVFGI), 158 to 178 (VLVPWLTLEPFNYLLGIILLF), 252 to 272 (YLLGIAIGSVLFSLFWGWVFL), and 298 to 318 (FVLALALSLTSIPFYSFEYLV).

It belongs to the ycf78 family.

Its subcellular location is the plastid. It is found in the chloroplast membrane. This is an uncharacterized protein from Chlorella vulgaris (Green alga).